Consider the following 57-residue polypeptide: UPF0391 membrane protein Nwi_2359 (57 aa).

2 helical membrane passes run 4-24 (WVVT…GGIA) and 30-50 (IAKI…VVGF).

It belongs to the UPF0391 family.

It is found in the cell membrane. The protein is UPF0391 membrane protein Nwi_2359 of Nitrobacter winogradskyi (strain ATCC 25391 / DSM 10237 / CIP 104748 / NCIMB 11846 / Nb-255).